Consider the following 256-residue polypeptide: Transcription factor bHLH131 (256 aa).

One can recognise a bHLH domain in the interval 91 to 140 (VAAKKHSDAERRRRLRINSQFATLRTILPNLVKQDKASVLGETVRYFNEL).

In terms of assembly, homodimer.

Its subcellular location is the nucleus. This Arabidopsis thaliana (Mouse-ear cress) protein is Transcription factor bHLH131 (BHLH131).